The primary structure comprises 883 residues: Puromycin-sensitive aminopeptidase (883 aa).

Substrate-binding positions include glutamate 125 and 265–269; that span reads GAMEN. Residue histidine 301 participates in Zn(2+) binding. Glutamate 302 (proton acceptor) is an active-site residue. Zn(2+)-binding residues include histidine 305 and glutamate 324.

It belongs to the peptidase M1 family. The cofactor is Zn(2+).

It carries out the reaction Release of an N-terminal amino acid, preferentially alanine, from a wide range of peptides, amides and arylamides.. Its activity is regulated as follows. Strongly inhibited by puromycin and DAMPAQ-22. Aminopeptidase with broad substrate specificity for several peptides. Involved in proteolytic events essential for cell growth and viability. Plays an essential role during prophase I of meiosis. Required for correct meiotic reconbination in both male and female gametophytes. This is Puromycin-sensitive aminopeptidase (MPA1) from Arabidopsis thaliana (Mouse-ear cress).